Consider the following 111-residue polypeptide: Iron-sulfur cluster insertion protein ErpA (111 aa).

The iron-sulfur cluster site is built by Cys39, Cys103, and Cys105.

Belongs to the HesB/IscA family. In terms of assembly, homodimer. Requires iron-sulfur cluster as cofactor.

Required for insertion of 4Fe-4S clusters for at least IspG. The protein is Iron-sulfur cluster insertion protein ErpA of Acinetobacter baumannii (strain AB307-0294).